Reading from the N-terminus, the 241-residue chain is ATP synthase subunit a (241 aa).

6 consecutive transmembrane segments (helical) span residues 19–39 (AVLI…AKMA), 80–100 (LVAA…IPGF), 106–126 (NINV…YEGI), 135–155 (FAHF…IEIV), 177–197 (LFLW…AYLL), and 203–223 (LLQT…AVAI).

It belongs to the ATPase A chain family. As to quaternary structure, F-type ATPases have 2 components, CF(1) - the catalytic core - and CF(0) - the membrane proton channel. CF(1) has five subunits: alpha(3), beta(3), gamma(1), delta(1), epsilon(1). CF(0) has three main subunits: a(1), b(2) and c(9-12). The alpha and beta chains form an alternating ring which encloses part of the gamma chain. CF(1) is attached to CF(0) by a central stalk formed by the gamma and epsilon chains, while a peripheral stalk is formed by the delta and b chains.

The protein localises to the cell inner membrane. Its function is as follows. Key component of the proton channel; it plays a direct role in the translocation of protons across the membrane. This chain is ATP synthase subunit a, found in Sulfurovum sp. (strain NBC37-1).